The sequence spans 485 residues: Glutamate--tRNA ligase (485 aa).

A 'HIGH' region motif is present at residues 12-22; it reads PSPTGEPHVGT. Positions 253 to 257 match the 'KMSKS' region motif; it reads KLSKR. An ATP-binding site is contributed by lysine 256.

Belongs to the class-I aminoacyl-tRNA synthetase family. Glutamate--tRNA ligase type 1 subfamily. In terms of assembly, monomer.

Its subcellular location is the cytoplasm. It catalyses the reaction tRNA(Glu) + L-glutamate + ATP = L-glutamyl-tRNA(Glu) + AMP + diphosphate. Catalyzes the attachment of glutamate to tRNA(Glu) in a two-step reaction: glutamate is first activated by ATP to form Glu-AMP and then transferred to the acceptor end of tRNA(Glu). The polypeptide is Glutamate--tRNA ligase (Rhizobium meliloti (strain 1021) (Ensifer meliloti)).